A 493-amino-acid chain; its full sequence is MLSRTAAPTKASARTLSRAAAEQCRTFATVQDGSANPVRHYGGLKDQDRIFQNLYGRYPPDLKHAKKMGDWHKTKEILLKGHDWIIGEVKASGLRGRGGAGFPSGLKWSFMNFKDWDKDDKPRYLVVNADEGEPGTCKDREIMRKDPHKLVEGCLVAGRAMNATAAYIYIRGEFIQEAAILQNAINEAYADGLIGKNACGSGYDFDVYLHRGAGAYVCGEETSLIESLEGKPGKPRLKPPFPAAVGLFGCPSTVANVETVAVAPTICRRGGNWFAGFGRERNQGTKLFCISGHVNNPCTVEEEMSIPMRELIDKHCGGVRGGWDNLLAVIPGGSSTPILPKHICDTQLMDFDALKDSQSGLGTAALIVMDKSTDVVRAISRLSHFYRHESCGQCTPCREGSKWTEQIMKRFEKGQGREREIDMLQELTKQVEGHTICALGEAFAWPIQGLIRHFRPELEARIRKFAQENGGEALAGGWQRNARQQGKLVSPGM.

The transit peptide at 1–27 directs the protein to the mitochondrion; it reads MLSRTAAPTKASARTLSRAAAEQCRTF. NAD(+) is bound at residue 96–105; it reads GRGGAGFPSG. 212–259 contributes to the FMN binding site; sequence GAGAYVCGEETSLIESLEGKPGKPRLKPPFPAAVGLFGCPSTVANVET. 4 residues coordinate [4Fe-4S] cluster: cysteine 391, cysteine 394, cysteine 397, and cysteine 437.

The protein belongs to the complex I 51 kDa subunit family. In terms of assembly, complex I is composed of about 40 different subunits. This is a component of the flavoprotein-sulfur (FP) fragment of the enzyme. The cofactor is FMN. [4Fe-4S] cluster serves as cofactor.

Its subcellular location is the mitochondrion inner membrane. The enzyme catalyses a ubiquinone + NADH + 5 H(+)(in) = a ubiquinol + NAD(+) + 4 H(+)(out). In terms of biological role, core subunit of the mitochondrial membrane respiratory chain NADH dehydrogenase (Complex I) that is believed to belong to the minimal assembly required for catalysis. Complex I functions in the transfer of electrons from NADH to the respiratory chain. The immediate electron acceptor for the enzyme is believed to be ubiquinone. In Neurospora crassa (strain ATCC 24698 / 74-OR23-1A / CBS 708.71 / DSM 1257 / FGSC 987), this protein is NADH-ubiquinone oxidoreductase 51 kDa subunit, mitochondrial (nuo-51).